Reading from the N-terminus, the 722-residue chain is Tegument protein UL46 (722 aa).

Residues 423 to 534 (RLAASGPPGG…AAAARPLAAQ (112 aa)) form a disordered region. 2 stretches are compositionally biased toward basic and acidic residues: residues 440-451 (CRDKIQRTRRDN) and 474-491 (HREDLPEPPHVDAADRGP). Pro residues predominate over residues 510-522 (PRLPPRNPAPPEQ). Positions 523–534 (RPAAAARPLAAQ) are enriched in low complexity.

This sequence belongs to the herpesviridae HHV-1 VP11/12 protein family. In terms of assembly, interacts with VP16. Interacts with host LCK, PIK3R1, SHC1 AND GRB2; these interactions promote the activation of the PI3K/AKT pathway. Interacts with host YWHAB. Interacts with ICP0; this interaction targets UL46 for degradation by the proteasome. Post-translationally, phosphorylated by host LCK. The phosphorylation seems to be lymphocyte-specific.

It localises to the virion tegument. The protein resides in the host cell membrane. Functionally, plays a role in the activation of the host PI3K/AKT pathway to promote cell survival. Interacts with and activates host LCK and thereby recruits downstream partners SHC1, GRB2 and PI3KR1 in order to activate the PI3K pathway by phosphorylating host AKT on its activating residues. This mechanism is inhibited by the viral protein US3 that instead promotes incorporation of UL46 into virions. The polypeptide is Tegument protein UL46 (Homo sapiens (Human)).